We begin with the raw amino-acid sequence, 443 residues long: MAKYFGTDGIRGEVANSTITVEFTQKLGNAVGSLINQKNYPKFVIVGQDTRSSGGFLKFALVSGLNAAGIDVLDLGVVPTPVVAFMTVKHRAAAGFVITASHNKFTDNGIKLFSSNGFKLDDALEEEVEDMIDGDFIYQPQFKFGSYKILANAIDEYIESIYSRFAKFVNYKGKVVVDCAHGAASHNFEALLDKFGINYVSIASNPDGLNINVGCGATCVSNIKKAVKEQKADLGISLDGDADRIIIVDENGQEIDGDGILNILAQYSDICGGTNGIVGTQMTNMSYENHYRANKIPFIRSKVGDRYVLEDLVKYGYKIGGESSGHVINLNFGTTGDGLFTAIQLLAIFSQADKPVSEFKLQGELMQQTLINVPLTKKVAREDLQKVASDVNDVEKRLGNRGRVLLRPSGTEPVLRVMVEADDKSLATNEAEYLVEKVKQKLV.

The Phosphoserine intermediate role is filled by serine 101. 4 residues coordinate Mg(2+): serine 101, aspartate 239, aspartate 241, and aspartate 243. Serine 101 is modified (phosphoserine).

The protein belongs to the phosphohexose mutase family. The cofactor is Mg(2+). Post-translationally, activated by phosphorylation.

It carries out the reaction alpha-D-glucosamine 1-phosphate = D-glucosamine 6-phosphate. Functionally, catalyzes the conversion of glucosamine-6-phosphate to glucosamine-1-phosphate. This chain is Phosphoglucosamine mutase, found in Francisella tularensis subsp. tularensis (strain FSC 198).